We begin with the raw amino-acid sequence, 86 residues long: MANIASARKRARQAEKNRQHNMALRSRFRTSVKKVLKAVVAGDKEAAQAALKAAVPVIDGTVNKGLIHKNKAARHKSRLNARVKAM.

Positions methionine 1 to methionine 22 are disordered.

This sequence belongs to the bacterial ribosomal protein bS20 family.

In terms of biological role, binds directly to 16S ribosomal RNA. This Thioalkalivibrio sulfidiphilus (strain HL-EbGR7) protein is Small ribosomal subunit protein bS20.